A 300-amino-acid chain; its full sequence is Enoyl-CoA hydratase domain-containing protein 3, mitochondrial (300 aa).

The transit peptide at 1-66 (MAVVAGLRAF…RNIVLSNPRR (66 aa)) directs the protein to the mitochondrion. Residues 34 to 53 (GSAGPAGSESEPRLTSTRQQ) are disordered. The residue at position 110 (Lys110) is an N6-succinyllysine.

The protein belongs to the enoyl-CoA hydratase/isomerase family.

It localises to the mitochondrion. Its function is as follows. May play a role in fatty acid biosynthesis and insulin sensitivity. The sequence is that of Enoyl-CoA hydratase domain-containing protein 3, mitochondrial from Mus musculus (Mouse).